The sequence spans 96 residues: Putative pterin-4-alpha-carbinolamine dehydratase (96 aa).

The protein belongs to the pterin-4-alpha-carbinolamine dehydratase family.

The catalysed reaction is (4aS,6R)-4a-hydroxy-L-erythro-5,6,7,8-tetrahydrobiopterin = (6R)-L-erythro-6,7-dihydrobiopterin + H2O. In Herpetosiphon aurantiacus (strain ATCC 23779 / DSM 785 / 114-95), this protein is Putative pterin-4-alpha-carbinolamine dehydratase.